Here is a 118-residue protein sequence, read N- to C-terminus: Holo-[acyl-carrier-protein] synthase (118 aa).

Mg(2+) contacts are provided by D6 and E55.

It belongs to the P-Pant transferase superfamily. AcpS family. Mg(2+) is required as a cofactor.

The protein localises to the cytoplasm. It carries out the reaction apo-[ACP] + CoA = holo-[ACP] + adenosine 3',5'-bisphosphate + H(+). In terms of biological role, transfers the 4'-phosphopantetheine moiety from coenzyme A to a Ser of acyl-carrier-protein. The protein is Holo-[acyl-carrier-protein] synthase of Chlorobium chlorochromatii (strain CaD3).